The following is an 84-amino-acid chain: ATP synthase subunit c (84 aa).

Transmembrane regions (helical) follow at residues 9–29 (IIGA…GFAI) and 54–74 (IVAG…LLFI).

Belongs to the ATPase C chain family. F-type ATPases have 2 components, F(1) - the catalytic core - and F(0) - the membrane proton channel. F(1) has five subunits: alpha(3), beta(3), gamma(1), delta(1), epsilon(1). F(0) has three main subunits: a(1), b(2) and c(10-14). The alpha and beta chains form an alternating ring which encloses part of the gamma chain. F(1) is attached to F(0) by a central stalk formed by the gamma and epsilon chains, while a peripheral stalk is formed by the delta and b chains.

Its subcellular location is the cell inner membrane. In terms of biological role, f(1)F(0) ATP synthase produces ATP from ADP in the presence of a proton or sodium gradient. F-type ATPases consist of two structural domains, F(1) containing the extramembraneous catalytic core and F(0) containing the membrane proton channel, linked together by a central stalk and a peripheral stalk. During catalysis, ATP synthesis in the catalytic domain of F(1) is coupled via a rotary mechanism of the central stalk subunits to proton translocation. Its function is as follows. Key component of the F(0) channel; it plays a direct role in translocation across the membrane. A homomeric c-ring of between 10-14 subunits forms the central stalk rotor element with the F(1) delta and epsilon subunits. In Glaesserella parasuis serovar 5 (strain SH0165) (Haemophilus parasuis), this protein is ATP synthase subunit c.